Here is a 206-residue protein sequence, read N- to C-terminus: LOB domain-containing protein 2 (206 aa).

Positions 1–20 are disordered; the sequence is MMQRNSNNTSITSNISNNSS. Positions 23 to 123 constitute an LOB domain; the sequence is QACASCKHQR…KSLVHNQPLI (101 aa).

It belongs to the LOB domain-containing protein family.

This is LOB domain-containing protein 2 (LBD2) from Arabidopsis thaliana (Mouse-ear cress).